We begin with the raw amino-acid sequence, 89 residues long: MAKKSKIAKDKKQREIVAIYAEKRRALKEAGDYQGLSSLPKDASPVRLRNRDSLDGRPRAYMRKFGVSRITFRELAHKGEIPGVKKASW.

Belongs to the universal ribosomal protein uS14 family. Part of the 30S ribosomal subunit. Contacts proteins S3 and S10.

In terms of biological role, binds 16S rRNA, required for the assembly of 30S particles and may also be responsible for determining the conformation of the 16S rRNA at the A site. This Acholeplasma laidlawii (strain PG-8A) protein is Small ribosomal subunit protein uS14.